The following is a 137-amino-acid chain: Large ribosomal subunit protein uL16 (137 aa).

This sequence belongs to the universal ribosomal protein uL16 family. Part of the 50S ribosomal subunit.

Its function is as follows. Binds 23S rRNA and is also seen to make contacts with the A and possibly P site tRNAs. The protein is Large ribosomal subunit protein uL16 of Acinetobacter baumannii (strain AB307-0294).